Consider the following 33-residue polypeptide: Kappa-theraphotoxin-Pg2a (33 aa).

3 disulfides stabilise this stretch: Cys-2–Cys-16, Cys-9–Cys-21, and Cys-15–Cys-28.

In terms of tissue distribution, expressed by the venom gland.

Its subcellular location is the secreted. Functionally, gating modifier of Kv2.1/KCNB1 channels. The sequence is that of Kappa-theraphotoxin-Pg2a from Chilobrachys guangxiensis (Chinese earth tiger tarantula).